The sequence spans 366 residues: tRNA pseudouridine synthase B (366 aa).

Residues M1 to V55 form a disordered region. The Nucleophile role is filled by D92.

This sequence belongs to the pseudouridine synthase TruB family. Type 1 subfamily.

It catalyses the reaction uridine(55) in tRNA = pseudouridine(55) in tRNA. Responsible for synthesis of pseudouridine from uracil-55 in the psi GC loop of transfer RNAs. The sequence is that of tRNA pseudouridine synthase B from Rhodopseudomonas palustris (strain ATCC BAA-98 / CGA009).